A 1169-amino-acid polypeptide reads, in one-letter code: Transcription-repair-coupling factor (1169 aa).

Positions 634–795 constitute a Helicase ATP-binding domain; the sequence is DMERARPMDR…MLGVRDLSVI (162 aa). An ATP-binding site is contributed by 647–654; that stretch reads GDVGYGKT. The short motif at 748–751 is the DEEQ box element; the sequence is DEEQ. Residues 809 to 970 form the Helicase C-terminal domain; sequence VLEQNTNFIK…GFKIAMRDLN (162 aa).

It in the N-terminal section; belongs to the UvrB family. In the C-terminal section; belongs to the helicase family. RecG subfamily.

It is found in the cytoplasm. In terms of biological role, couples transcription and DNA repair by recognizing RNA polymerase (RNAP) stalled at DNA lesions. Mediates ATP-dependent release of RNAP and its truncated transcript from the DNA, and recruitment of nucleotide excision repair machinery to the damaged site. In Staphylococcus epidermidis (strain ATCC 35984 / DSM 28319 / BCRC 17069 / CCUG 31568 / BM 3577 / RP62A), this protein is Transcription-repair-coupling factor.